Here is a 136-residue protein sequence, read N- to C-terminus: ATP synthase epsilon chain, chloroplastic (136 aa).

This sequence belongs to the ATPase epsilon chain family. In terms of assembly, F-type ATPases have 2 components, CF(1) - the catalytic core - and CF(0) - the membrane proton channel. CF(1) has five subunits: alpha(3), beta(3), gamma(1), delta(1), epsilon(1). CF(0) has three main subunits: a, b and c.

The protein localises to the plastid. The protein resides in the chloroplast thylakoid membrane. Its function is as follows. Produces ATP from ADP in the presence of a proton gradient across the membrane. The chain is ATP synthase epsilon chain, chloroplastic from Tetradesmus obliquus (Green alga).